Here is a 1906-residue protein sequence, read N- to C-terminus: DENN domain-containing protein 4C (1906 aa).

The region spanning 40 to 199 is the MABP domain; the sequence is KAPITDIAVI…NVFLCYKKSV (160 aa). In terms of domain architecture, uDENN spans 191–363; sequence VFLCYKKSVP…NIPFPSPQRP (173 aa). The cDENN domain maps to 384 to 520; that stretch reads PLPLSGANFS…PCKSLLGTLR (137 aa). The region spanning 522-640 is the dDENN domain; the sequence is LYQQLCSVHR…CSFVSDKDTG (119 aa). Phosphoserine occurs at positions 702, 736, and 740. The stretch at 818 to 852 is one PPR repeat; it reads DEVCYRVVMQLCGLWVNPVLAVRVLFEMKTARIKP. Residues 904–917 are compositionally biased toward polar residues; it reads SQVFSISGGQSDQG. 2 disordered regions span residues 904–942 and 963–984; these read SQVF…PPEL and LQPT…SIVK. Residues 920–939 show a composition bias toward basic and acidic residues; sequence SKDELVKEGADGHAPEEHTP. T966 bears the Phosphothreonine mark. Residues 966-975 are compositionally biased toward pro residues; the sequence is TPEPQSPTEP. S971 is modified (phosphoserine). T973 is modified (phosphothreonine). A phosphoserine mark is found at S987, S1000, S1043, S1058, S1096, and S1123. A compositionally biased stretch (polar residues) spans 1154-1171; the sequence is NSLQSNSHSDQSRDTQAG. Residues 1154–1184 form a disordered region; sequence NSLQSNSHSDQSRDTQAGAQDPVNKRSSSYA. 5 positions are modified to phosphoserine: S1181, S1221, S1240, S1248, and S1274. Residues 1246-1317 form a disordered region; the sequence is SCSMELHGEG…PQSPYRAYKD (72 aa). A compositionally biased stretch (basic and acidic residues) spans 1281–1291; that stretch reads PPARDSTETEK. Polar residues predominate over residues 1292–1302; sequence SSPAVSSSKTL. Residues S1321, S1333, and S1342 each carry the phosphoserine modification. Disordered regions lie at residues 1410–1440, 1548–1577, and 1596–1628; these read SPNT…GDVG, STSG…SAEP, and ASYT…LSKR. Residues 1423 to 1437 are compositionally biased toward low complexity; sequence LTQSNTSLGSSSSSG. 2 stretches are compositionally biased toward polar residues: residues 1548–1564 and 1611–1628; these read STSG…SASE and GDVQ…LSKR. Phosphoserine occurs at positions 1620, 1624, 1626, 1637, and 1796.

Phosphorylated in response to insulin.

Its subcellular location is the cytoplasmic vesicle membrane. It localises to the cell membrane. It is found in the cytoplasm. The protein localises to the cytosol. Its function is as follows. Guanine nucleotide exchange factor (GEF) activating RAB10. Promotes the exchange of GDP to GTP, converting inactive GDP-bound RAB10 into its active GTP-bound form. Thereby, stimulates SLC2A4/GLUT4 glucose transporter-enriched vesicles delivery to the plasma membrane in response to insulin. This Mus musculus (Mouse) protein is DENN domain-containing protein 4C (Dennd4c).